Here is a 274-residue protein sequence, read N- to C-terminus: Histone H1.1 (274 aa).

Disordered stretches follow at residues 1-63 and 129-155; these read MSEV…SSHP and PSAS…PATV. Ser2 is modified (N-acetylserine). Residues 16–25 show a composition bias toward low complexity; sequence TAADAPVTDA. Residues 40-49 are compositionally biased toward basic and acidic residues; that stretch reads NVKEVKEKKT. The region spanning 61 to 130 is the H15 domain; the sequence is SHPTYEEMIK…KVKASFKLPS (70 aa). The span at 129-145 shows a compositional bias: low complexity; sequence PSASAKASSPKAAAEKS. Lys161 is covalently cross-linked (Glycyl lysine isopeptide (Lys-Gly) (interchain with G-Cter in ubiquitin)). Disordered regions lie at residues 167 to 233 and 249 to 274; these read ASKA…PAKK and KTPV…RVKK. Composition is skewed to low complexity over residues 175-185 and 221-233; these read AVKPKTAAAKK and AAKT…PAKK.

Belongs to the histone H1/H5 family.

Its subcellular location is the nucleus. It is found in the chromosome. Functionally, histones H1 are necessary for the condensation of nucleosome chains into higher-order structures. The chain is Histone H1.1 from Arabidopsis thaliana (Mouse-ear cress).